The chain runs to 26 residues: Cytochrome c oxidase subunit 2 (26 aa).

This sequence belongs to the cytochrome c oxidase subunit 2 family. As to quaternary structure, component of the cytochrome c oxidase (complex IV, CIV), a multisubunit enzyme composed of a catalytic core of 3 subunits and several supernumerary subunits. The complex exists as a monomer or a dimer and forms supercomplexes (SCs) in the inner mitochondrial membrane with ubiquinol-cytochrome c oxidoreductase (cytochrome b-c1 complex, complex III, CIII). Cu cation is required as a cofactor.

The protein localises to the mitochondrion inner membrane. The catalysed reaction is 4 Fe(II)-[cytochrome c] + O2 + 8 H(+)(in) = 4 Fe(III)-[cytochrome c] + 2 H2O + 4 H(+)(out). Component of the cytochrome c oxidase, the last enzyme in the mitochondrial electron transport chain which drives oxidative phosphorylation. The respiratory chain contains 3 multisubunit complexes succinate dehydrogenase (complex II, CII), ubiquinol-cytochrome c oxidoreductase (cytochrome b-c1 complex, complex III, CIII) and cytochrome c oxidase (complex IV, CIV), that cooperate to transfer electrons derived from NADH and succinate to molecular oxygen, creating an electrochemical gradient over the inner membrane that drives transmembrane transport and the ATP synthase. Cytochrome c oxidase is the component of the respiratory chain that catalyzes the reduction of oxygen to water. Electrons originating from reduced cytochrome c in the intermembrane space (IMS) are transferred via the dinuclear copper A center (CU(A)) of subunit 2 and heme A of subunit 1 to the active site in subunit 1, a binuclear center (BNC) formed by heme A3 and copper B (CU(B)). The BNC reduces molecular oxygen to 2 water molecules using 4 electrons from cytochrome c in the IMS and 4 protons from the mitochondrial matrix. In Solanum tuberosum (Potato), this protein is Cytochrome c oxidase subunit 2 (COX2).